The chain runs to 455 residues: Chromosomal replication initiator protein DnaA (455 aa).

Residues Met-1–Asp-77 form a domain I, interacts with DnaA modulators region. The domain II stretch occupies residues Asp-77–Ser-116. The segment at Gly-117–Ala-333 is domain III, AAA+ region. Residues Gly-161, Gly-163, Lys-164, and Thr-165 each contribute to the ATP site. Positions Arg-334–Phe-455 are domain IV, binds dsDNA.

It belongs to the DnaA family. As to quaternary structure, oligomerizes as a right-handed, spiral filament on DNA at oriC.

It localises to the cytoplasm. In terms of biological role, plays an essential role in the initiation and regulation of chromosomal replication. ATP-DnaA binds to the origin of replication (oriC) to initiate formation of the DNA replication initiation complex once per cell cycle. Binds the DnaA box (a 9 base pair repeat at the origin) and separates the double-stranded (ds)DNA. Forms a right-handed helical filament on oriC DNA; dsDNA binds to the exterior of the filament while single-stranded (ss)DNA is stabiized in the filament's interior. The ATP-DnaA-oriC complex binds and stabilizes one strand of the AT-rich DNA unwinding element (DUE), permitting loading of DNA polymerase. After initiation quickly degrades to an ADP-DnaA complex that is not apt for DNA replication. Binds acidic phospholipids. The chain is Chromosomal replication initiator protein DnaA from Lactococcus lactis subsp. lactis (strain IL1403) (Streptococcus lactis).